A 24-amino-acid chain; its full sequence is Brevinin-1Ra (24 aa).

Cysteines 18 and 24 form a disulfide.

As to expression, expressed by the skin glands.

The protein resides in the secreted. In terms of biological role, antimicrobial peptide. The chain is Brevinin-1Ra from Pelophylax ridibundus (Marsh frog).